A 402-amino-acid chain; its full sequence is Phytoene synthase 2, chloroplastic (402 aa).

The transit peptide at 1 to 54 (MAAGSSAVWAAQHPACSGGKFHHLSPSHSHCRPRRALQTPPALPARRSGASPPR) directs the protein to the chloroplast. A compositionally biased stretch (basic residues) spans 20–35 (KFHHLSPSHSHCRPRR). The segment at 20-54 (KFHHLSPSHSHCRPRRALQTPPALPARRSGASPPR) is disordered. Over residues 44-54 (PARRSGASPPR) the composition is skewed to low complexity.

It belongs to the phytoene/squalene synthase family. Expressed in leaves and endosperm.

The protein resides in the plastid. The protein localises to the chloroplast. Its subcellular location is the plastoglobule. It carries out the reaction 2 (2E,6E,10E)-geranylgeranyl diphosphate = 15-cis-phytoene + 2 diphosphate. Functionally, catalyzes the conversion of geranylgeranyl diphosphate to phytoene. Mediates the first committed step in carotenoid biosynthesis. This is Phytoene synthase 2, chloroplastic from Zea mays (Maize).